Reading from the N-terminus, the 250-residue chain is Tripartite motif-containing protein 73 (250 aa).

The RING-type zinc finger occupies 16–57; it reads CPICLEVFKESLMLQCGHSYCKGCLVSLSYHLDTKVRCPMCW. The B box-type zinc finger occupies 84–125; it reads PEPKVCVHHRNPLSLFCEKDQELICGLCGLLGSHQHHPVTPV. The Zn(2+) site is built by Cys89, His92, Cys111, and His117. Coiled coils occupy residues 125–169 and 204–235; these read VSTV…NESD and LVAS…FGNE.

Belongs to the TRIM/RBCC family.

In Homo sapiens (Human), this protein is Tripartite motif-containing protein 73 (TRIM73).